A 195-amino-acid chain; its full sequence is Imidazoleglycerol-phosphate dehydratase (195 aa).

Belongs to the imidazoleglycerol-phosphate dehydratase family.

It localises to the cytoplasm. It catalyses the reaction D-erythro-1-(imidazol-4-yl)glycerol 3-phosphate = 3-(imidazol-4-yl)-2-oxopropyl phosphate + H2O. Its pathway is amino-acid biosynthesis; L-histidine biosynthesis; L-histidine from 5-phospho-alpha-D-ribose 1-diphosphate: step 6/9. The sequence is that of Imidazoleglycerol-phosphate dehydratase from Pelobacter propionicus (strain DSM 2379 / NBRC 103807 / OttBd1).